The sequence spans 393 residues: Protein TsgA (393 aa).

Transmembrane regions (helical) follow at residues 11–31 (WISF…GMVM), 51–71 (FLNA…EIVP), 78–98 (FGFL…SLAL), 101–121 (AAMF…TFLV), 134–154 (LLFT…IAAF), 162–182 (WYWV…LTFG), 206–226 (IGVL…LGFI), 245–265 (TLVS…SFIL), 273–293 (ILTV…TGTP), 297–317 (AWSI…IITL), 332–352 (FVLT…GPIV), and 361–381 (LLTA…LGFV).

This sequence belongs to the major facilitator superfamily. TsgA family.

Its subcellular location is the cell inner membrane. The chain is Protein TsgA from Escherichia coli O139:H28 (strain E24377A / ETEC).